The sequence spans 236 residues: Peptidase E (236 aa).

Residues Ser122, Asp137, and His159 each act as charge relay system in the active site.

It belongs to the peptidase S51 family.

The protein localises to the cytoplasm. It carries out the reaction Dipeptidase E catalyzes the hydrolysis of dipeptides Asp-|-Xaa. It does not act on peptides with N-terminal Glu, Asn or Gln, nor does it cleave isoaspartyl peptides.. Hydrolyzes dipeptides containing N-terminal aspartate residues. May play a role in allowing the cell to use peptide aspartate to spare carbon otherwise required for the synthesis of the aspartate family of amino acids. In Shewanella putrefaciens (strain CN-32 / ATCC BAA-453), this protein is Peptidase E.